We begin with the raw amino-acid sequence, 239 residues long: Probable transcriptional regulatory protein Ajs_1898 (239 aa).

Residues 1-21 (MAGHSKWANIQHRKGRQDEKR) form a disordered region.

This sequence belongs to the TACO1 family.

The protein localises to the cytoplasm. The chain is Probable transcriptional regulatory protein Ajs_1898 from Acidovorax sp. (strain JS42).